Here is a 246-residue protein sequence, read N- to C-terminus: Histone H1 (246 aa).

Disordered regions lie at residues 1–51 (MATD…PTHL) and 105–246 (GGKL…KAKK). The span at 9–34 (PAPLVDAAPEAPADAPAAPAADANAA) shows a compositional bias: low complexity. The segment covering 35 to 47 (KAKKATAPKKRAS) has biased composition (basic residues). The region spanning 49–119 (THLPYAEMVS…KVKNSYKLSS (71 aa)) is the H15 domain. Composition is skewed to basic residues over residues 129 to 189 (AAPK…KAKP) and 198 to 208 (PLAKKAGRAKA). The segment covering 224-235 (KKAAPSKKAATP) has biased composition (low complexity).

This sequence belongs to the histone H1/H5 family.

It localises to the nucleus. Its subcellular location is the chromosome. In terms of biological role, histones H1 are necessary for the condensation of nucleosome chains into higher-order structures. This chain is Histone H1, found in Zea mays (Maize).